A 137-amino-acid chain; its full sequence is Thionin-like protein 1 (137 aa).

The first 23 residues, 1-23 (MEDKRVAMLVVMMLVMGNMLIEA), serve as a signal peptide directing secretion.

Belongs to the plant thionin (TC 1.C.44) family. Post-translationally, is disulfide-linked.

It localises to the secreted. May be involved in plant defense. This chain is Thionin-like protein 1, found in Arabidopsis thaliana (Mouse-ear cress).